Reading from the N-terminus, the 110-residue chain is ATP-dependent Clp protease adapter protein ClpS (110 aa).

This sequence belongs to the ClpS family. Binds to the N-terminal domain of the chaperone ClpA.

In terms of biological role, involved in the modulation of the specificity of the ClpAP-mediated ATP-dependent protein degradation. This Bartonella quintana (strain Toulouse) (Rochalimaea quintana) protein is ATP-dependent Clp protease adapter protein ClpS.